Consider the following 394-residue polypeptide: RILP-like protein 1 (394 aa).

One can recognise an RH1 domain in the interval 2–89 (EGISALEKNV…RLERMDRIEK (88 aa)). Residues 68–327 (EMEELRLELD…EAEEENKLPQ (260 aa)) are a coiled coil. The RH2 domain maps to 282 to 347 (RPRFTLQELR…IPQESGIKRL (66 aa)).

Belongs to the RILPL family.

The protein localises to the cytoplasm. The protein resides in the cytosol. Its subcellular location is the cytoskeleton. It is found in the microtubule organizing center. It localises to the centrosome. The protein localises to the cell projection. The protein resides in the cilium. Its function is as follows. Plays a role in the regulation of cell shape and polarity. Plays a role in cellular protein transport, including protein transport away from primary cilia. Neuroprotective protein. This Xenopus laevis (African clawed frog) protein is RILP-like protein 1 (rilpl1).